The sequence spans 84 residues: uncharacterized protein (84 aa).

An HTH cro/C1-type domain is found at 7-62; sequence IDVMLAKRKMSVTELSERVGITMANLSILKNGKAKAIRLSTLEAICKALECQPGDI. A DNA-binding region (H-T-H motif) is located at residues 18–37; it reads VTELSERVGITMANLSILKN.

This is an uncharacterized protein from Bacillus subtilis (strain 168).